Reading from the N-terminus, the 174-residue chain is Small ribosomal subunit protein bS16 (174 aa).

A disordered region spans residues 81–174 (QRFTGEPAPP…DATTDATPSA (94 aa)). A compositionally biased stretch (pro residues) spans 87 to 97 (PAPPPMKTAPP). The segment covering 98-118 (KPDKKALFEAAAKEAAGEPRA) has biased composition (basic and acidic residues). Positions 135–158 (ETTPAAEAAPDAAASADEPAGGAS) are enriched in low complexity. The segment covering 160 to 174 (AAESQDATTDATPSA) has biased composition (polar residues).

Belongs to the bacterial ribosomal protein bS16 family.

The sequence is that of Small ribosomal subunit protein bS16 from Acidothermus cellulolyticus (strain ATCC 43068 / DSM 8971 / 11B).